Consider the following 185-residue polypeptide: Elongation factor P (185 aa).

This sequence belongs to the elongation factor P family.

It is found in the cytoplasm. It functions in the pathway protein biosynthesis; polypeptide chain elongation. Its function is as follows. Involved in peptide bond synthesis. Stimulates efficient translation and peptide-bond synthesis on native or reconstituted 70S ribosomes in vitro. Probably functions indirectly by altering the affinity of the ribosome for aminoacyl-tRNA, thus increasing their reactivity as acceptors for peptidyl transferase. The chain is Elongation factor P from Bacillus velezensis (strain DSM 23117 / BGSC 10A6 / LMG 26770 / FZB42) (Bacillus amyloliquefaciens subsp. plantarum).